The sequence spans 257 residues: Cytochrome c oxidase subunit 3 (257 aa).

The next 6 membrane-spanning stretches (helical) occupy residues 15–35 (PWPL…VKWF), 82–102 (GMIL…WGFF), 124–144 (FLSA…VTWA), 156–176 (CLQG…LQGL), 194–214 (FFLA…FLMI), and 235–255 (AWYW…IYWW).

The protein belongs to the cytochrome c oxidase subunit 3 family. In terms of assembly, component of the cytochrome c oxidase (complex IV, CIV), a multisubunit enzyme composed of a catalytic core of 3 subunits and several supernumerary subunits. The complex exists as a monomer or a dimer and forms supercomplexes (SCs) in the inner mitochondrial membrane with ubiquinol-cytochrome c oxidoreductase (cytochrome b-c1 complex, complex III, CIII).

Its subcellular location is the mitochondrion inner membrane. The catalysed reaction is 4 Fe(II)-[cytochrome c] + O2 + 8 H(+)(in) = 4 Fe(III)-[cytochrome c] + 2 H2O + 4 H(+)(out). Its function is as follows. Component of the cytochrome c oxidase, the last enzyme in the mitochondrial electron transport chain which drives oxidative phosphorylation. The respiratory chain contains 3 multisubunit complexes succinate dehydrogenase (complex II, CII), ubiquinol-cytochrome c oxidoreductase (cytochrome b-c1 complex, complex III, CIII) and cytochrome c oxidase (complex IV, CIV), that cooperate to transfer electrons derived from NADH and succinate to molecular oxygen, creating an electrochemical gradient over the inner membrane that drives transmembrane transport and the ATP synthase. Cytochrome c oxidase is the component of the respiratory chain that catalyzes the reduction of oxygen to water. Electrons originating from reduced cytochrome c in the intermembrane space (IMS) are transferred via the dinuclear copper A center (CU(A)) of subunit 2 and heme A of subunit 1 to the active site in subunit 1, a binuclear center (BNC) formed by heme A3 and copper B (CU(B)). The BNC reduces molecular oxygen to 2 water molecules using 4 electrons from cytochrome c in the IMS and 4 protons from the mitochondrial matrix. The chain is Cytochrome c oxidase subunit 3 (COIII) from Artemia franciscana (Brine shrimp).